The chain runs to 101 residues: Large ribosomal subunit protein bL21 (101 aa).

The protein belongs to the bacterial ribosomal protein bL21 family. In terms of assembly, part of the 50S ribosomal subunit. Contacts protein L20.

This protein binds to 23S rRNA in the presence of protein L20. The chain is Large ribosomal subunit protein bL21 from Anaeromyxobacter dehalogenans (strain 2CP-1 / ATCC BAA-258).